Reading from the N-terminus, the 490-residue chain is Serine palmitoyltransferase 2 (490 aa).

Residues 10–30 form a helical membrane-spanning segment; the sequence is VDDVGYLPILFLYIAYAFIIF. The residue at position 321 (K321) is an N6-(pyridoxal phosphate)lysine.

The protein belongs to the class-II pyridoxal-phosphate-dependent aminotransferase family. As to quaternary structure, forms a heterodimer with sptA. Requires pyridoxal 5'-phosphate as cofactor.

The protein localises to the endoplasmic reticulum membrane. It catalyses the reaction L-serine + hexadecanoyl-CoA + H(+) = 3-oxosphinganine + CO2 + CoA. It functions in the pathway lipid metabolism; sphingolipid metabolism. In terms of biological role, catalytic subunit of serine palmitoyltransferase (SPT), which catalyzes the committed step in the synthesis of sphingolipids, the condensation of serine with palmitoyl CoA to form the long chain base 3-ketosphinganine. This chain is Serine palmitoyltransferase 2 (sptB), found in Dictyostelium discoideum (Social amoeba).